The primary structure comprises 476 residues: Protein transport protein Sec61 subunit alpha-like 1 (476 aa).

At 2–33 (AIKFLEVIKPFCAVLPEIQKPERKIQFREKVL) the chain is on the cytoplasmic side. A helical membrane pass occupies residues 34–53 (WTAITLFIFLVCCQIPLFGI). Residues 54 to 76 (MSSDSADPFYWMRVILASNRGTL) lie on the Lumenal side of the membrane. The helical transmembrane segment at 77-96 (MELGISPIVTSGLIMQLLAG) threads the bilayer. Residues 97 to 117 (AKIIEVGDTPKDRALFNGAQK) lie on the Cytoplasmic side of the membrane. The chain crosses the membrane as a helical span at residues 118-138 (LFGMIITIGQAIVYVMTGMYG). Residues 139 to 144 (DPSEMG) are Lumenal-facing. A helical transmembrane segment spans residues 145–165 (AGICLLIIIQLFVAGLIVLLL). Over 166-172 (DELLQKG) the chain is Cytoplasmic. Residues 173–193 (YGLGSGISLFIATNICETIVW) traverse the membrane as a helical segment. Topologically, residues 194–240 (KAFSPTTVNTGRGTEFEGAIIALFHLLATRTDKVRALREAFYRQNLP) are lumenal. The helical transmembrane segment at 241–261 (NLMNLIATVFVFAVVIYFQGF) threads the bilayer. At 262-288 (RVDLPIKSARYRGQYNTYPIKLFYTSN) the chain is on the cytoplasmic side. The chain crosses the membrane as a helical span at residues 289–309 (IPIILQSALVSNLYVISQMLS). Topologically, residues 310–354 (TRFSGNFLVNLLGTWSDTSSGGPARAYPVGGLCYYLSPPESFGSV) are lumenal. The helical transmembrane segment at 355-375 (LDDPVHAVIYIVFMLGSCAFF) threads the bilayer. Over 376-420 (SKTWIEVSGSSAKDVAKQLKEQQMVMRGHRETSMVHELNRYIPTA) the chain is Cytoplasmic. The helical transmembrane segment at 421–441 (AAFGGLCIGGLSVMADFLGAI) threads the bilayer. Over 442–445 (GSGT) the chain is Lumenal. Residues 446-462 (GILLAVTIIYQYFEIFV) form a helical membrane-spanning segment. Residues 463–476 (KEQSEVGSMGALLF) are Cytoplasmic-facing.

The protein belongs to the SecY/SEC61-alpha family. As to quaternary structure, the SEC61 channel-forming translocon complex consists of channel-forming core components SEC61A1, SEC61B and SEC61G and different auxiliary components such as SEC62 and SEC63. The SEC61 channel associates with the multi-pass translocon (MPT) complex.

It localises to the endoplasmic reticulum membrane. Functionally, component of SEC61 channel-forming translocon complex that mediates transport of signal peptide-containing precursor polypeptides across the endoplasmic reticulum (ER). Forms a ribosome receptor and a gated pore in the ER membrane, both functions required for cotranslational translocation of nascent polypeptides. May cooperate with auxiliary protein SEC62, SEC63 and HSPA5/BiP to enable post-translational transport of small presecretory proteins. The SEC61 channel is also involved in ER membrane insertion of transmembrane proteins: it mediates membrane insertion of the first few transmembrane segments of proteins, while insertion of subsequent transmembrane regions of multi-pass membrane proteins is mediated by the multi-pass translocon (MPT) complex. Plays a role in the pronephric kidney tubule development. This chain is Protein transport protein Sec61 subunit alpha-like 1 (sec61al1), found in Danio rerio (Zebrafish).